The following is a 172-amino-acid chain: Photosystem I assembly protein Ycf3 (172 aa).

3 TPR repeats span residues 35-70 (AFTY…EIDP), 74-107 (SYIL…NPFL), and 122-155 (GERA…TPGN).

This sequence belongs to the Ycf3 family.

It is found in the plastid. The protein resides in the chloroplast thylakoid membrane. Its function is as follows. Essential for the assembly of the photosystem I (PSI) complex. May act as a chaperone-like factor to guide the assembly of the PSI subunits. The sequence is that of Photosystem I assembly protein Ycf3 from Dioscorea elephantipes (Elephant's foot yam).